The sequence spans 89 residues: Elongation factor 1-beta (89 aa).

Belongs to the EF-1-beta/EF-1-delta family.

Promotes the exchange of GDP for GTP in EF-1-alpha/GDP, thus allowing the regeneration of EF-1-alpha/GTP that could then be used to form the ternary complex EF-1-alpha/GTP/AAtRNA. The chain is Elongation factor 1-beta from Methanocella arvoryzae (strain DSM 22066 / NBRC 105507 / MRE50).